We begin with the raw amino-acid sequence, 394 residues long: Bifunctional enzyme IspD/IspF (394 aa).

A 2-C-methyl-D-erythritol 4-phosphate cytidylyltransferase region spans residues methionine 1 to valine 230. A 2-C-methyl-D-erythritol 2,4-cyclodiphosphate synthase region spans residues leucine 231–leucine 394. Residues aspartate 237 and histidine 239 each coordinate a divalent metal cation. Residues aspartate 237–histidine 239 and histidine 263–serine 264 contribute to the 4-CDP-2-C-methyl-D-erythritol 2-phosphate site. A divalent metal cation is bound at residue histidine 271. 4-CDP-2-C-methyl-D-erythritol 2-phosphate-binding positions include aspartate 285–glycine 287, phenylalanine 290–aspartate 294, threonine 361–glutamate 364, and phenylalanine 368.

It in the N-terminal section; belongs to the IspD/TarI cytidylyltransferase family. IspD subfamily. This sequence in the C-terminal section; belongs to the IspF family. The cofactor is a divalent metal cation.

The catalysed reaction is 2-C-methyl-D-erythritol 4-phosphate + CTP + H(+) = 4-CDP-2-C-methyl-D-erythritol + diphosphate. The enzyme catalyses 4-CDP-2-C-methyl-D-erythritol 2-phosphate = 2-C-methyl-D-erythritol 2,4-cyclic diphosphate + CMP. Its pathway is isoprenoid biosynthesis; isopentenyl diphosphate biosynthesis via DXP pathway; isopentenyl diphosphate from 1-deoxy-D-xylulose 5-phosphate: step 2/6. It participates in isoprenoid biosynthesis; isopentenyl diphosphate biosynthesis via DXP pathway; isopentenyl diphosphate from 1-deoxy-D-xylulose 5-phosphate: step 4/6. Its function is as follows. Bifunctional enzyme that catalyzes the formation of 4-diphosphocytidyl-2-C-methyl-D-erythritol from CTP and 2-C-methyl-D-erythritol 4-phosphate (MEP) (IspD), and catalyzes the conversion of 4-diphosphocytidyl-2-C-methyl-D-erythritol 2-phosphate (CDP-ME2P) to 2-C-methyl-D-erythritol 2,4-cyclodiphosphate (ME-CPP) with a corresponding release of cytidine 5-monophosphate (CMP) (IspF). The protein is Bifunctional enzyme IspD/IspF of Desulforudis audaxviator (strain MP104C).